Reading from the N-terminus, the 100-residue chain is Large ribosomal subunit protein bL21 (100 aa).

The protein belongs to the bacterial ribosomal protein bL21 family. Part of the 50S ribosomal subunit. Contacts protein L20.

In terms of biological role, this protein binds to 23S rRNA in the presence of protein L20. The polypeptide is Large ribosomal subunit protein bL21 (Mycoplasma pneumoniae (strain ATCC 29342 / M129 / Subtype 1) (Mycoplasmoides pneumoniae)).